The chain runs to 141 residues: VLSPADKTNVKAAWGKVGGHAGEYGAEALERMFLSFPTTKTYFPHFDLSHGSAQVKGHGKKVADALTLAVGHVDDMPQALSALSDLHAHKLRVDPVNFKLLSHCLLVTLAAHLPAEFTPAVHASLDKFLASVSTVLTSKYR.

Positions 1–141 (VLSPADKTNV…VSTVLTSKYR (141 aa)) constitute a Globin domain. S3 carries the post-translational modification Phosphoserine. At K7 the chain carries N6-succinyllysine. Residue T8 is modified to Phosphothreonine. At K11 the chain carries N6-succinyllysine. Position 16 is an N6-acetyllysine; alternate (K16). K16 carries the post-translational modification N6-succinyllysine; alternate. The residue at position 24 (Y24) is a Phosphotyrosine. A Phosphoserine modification is found at S35. N6-succinyllysine is present on K40. A Phosphoserine modification is found at S49. Residue H58 coordinates O2. H87 lines the heme b pocket. Phosphoserine is present on S102. T108 bears the Phosphothreonine mark. Phosphoserine is present on residues S124 and S131. 2 positions are modified to phosphothreonine: T134 and T137. Residue S138 is modified to Phosphoserine.

This sequence belongs to the globin family. As to quaternary structure, heterotetramer of two alpha chains and two beta chains. In terms of tissue distribution, red blood cells.

In terms of biological role, involved in oxygen transport from the lung to the various peripheral tissues. The polypeptide is Hemoglobin subunit alpha-A/Q/R/T (Macaca fascicularis (Crab-eating macaque)).